Consider the following 499-residue polypeptide: Uridine-cytidine kinase A (499 aa).

The disordered stretch occupies residues Met-1–Thr-44. Residues Thr-10–Thr-38 show a composition bias toward low complexity. Gly-78–Thr-85 provides a ligand contact to ATP.

Belongs to the uridine kinase family.

It carries out the reaction uridine + ATP = UMP + ADP + H(+). It catalyses the reaction cytidine + ATP = CMP + ADP + H(+). The protein operates within pyrimidine metabolism; CTP biosynthesis via salvage pathway; CTP from cytidine: step 1/3. Its pathway is pyrimidine metabolism; UMP biosynthesis via salvage pathway; UMP from uridine: step 1/1. Functionally, catalyzes the conversion of uridine into uridine monophosphate and cytidine into cytidine monophosphate in the pyrimidine salvage pathway. In Dictyostelium discoideum (Social amoeba), this protein is Uridine-cytidine kinase A (udkA).